Here is a 101-residue protein sequence, read N- to C-terminus: Small ribosomal subunit protein uS14 (101 aa).

This sequence belongs to the universal ribosomal protein uS14 family. As to quaternary structure, part of the 30S ribosomal subunit. Contacts proteins S3 and S10.

Its function is as follows. Binds 16S rRNA, required for the assembly of 30S particles and may also be responsible for determining the conformation of the 16S rRNA at the A site. This chain is Small ribosomal subunit protein uS14, found in Klebsiella pneumoniae (strain 342).